The primary structure comprises 141 residues: Granulocyte-macrophage colony-stimulating factor (141 aa).

The N-terminal stretch at Met-1 to Ser-17 is a signal peptide. Ser-22 carries O-linked (GalNAc...) serine glycosylation. The O-linked (GalNAc...) threonine glycan is linked to Thr-27. Intrachain disulfides connect Cys-68-Cys-110 and Cys-102-Cys-135. 2 N-linked (GlcNAc...) asparagine glycosylation sites follow: Asn-83 and Asn-92.

It belongs to the GM-CSF family. Monomer. The signaling GM-CSF receptor complex is a dodecamer of two head-to-head hexamers of two alpha, two beta, and two ligand subunits.

It is found in the secreted. Cytokine that stimulates the growth and differentiation of hematopoietic precursor cells from various lineages, including granulocytes, macrophages, eosinophils and erythrocytes. The polypeptide is Granulocyte-macrophage colony-stimulating factor (Csf2) (Mus musculus (Mouse)).